Consider the following 133-residue polypeptide: uncharacterized protein (133 aa).

A disordered region spans residues 82–133 (KIKSYSPSRSQKALNNPSKIRTKQTNNDTTIQQSNNTTSTNTKPSSNTNTQQ). A compositionally biased stretch (polar residues) spans 86–100 (YSPSRSQKALNNPSK). Residues 105–133 (QTNNDTTIQQSNNTTSTNTKPSSNTNTQQ) are compositionally biased toward low complexity.

This is an uncharacterized protein from Acidianus convivator (ABV).